Consider the following 359-residue polypeptide: Glutamate 5-kinase (359 aa).

Lys7 contacts ATP. The substrate site is built by Ser47, Asp135, and Asn147. ATP is bound at residue 202–208 (SGGITSK). Residues 266–343 (KGSIFINEGA…DQLEDVLGYS (78 aa)) enclose the PUA domain.

The protein belongs to the glutamate 5-kinase family.

The protein resides in the cytoplasm. It catalyses the reaction L-glutamate + ATP = L-glutamyl 5-phosphate + ADP. It functions in the pathway amino-acid biosynthesis; L-proline biosynthesis; L-glutamate 5-semialdehyde from L-glutamate: step 1/2. In terms of biological role, catalyzes the transfer of a phosphate group to glutamate to form L-glutamate 5-phosphate. The sequence is that of Glutamate 5-kinase from Kosmotoga olearia (strain ATCC BAA-1733 / DSM 21960 / TBF 19.5.1).